The primary structure comprises 285 residues: Glutamate racemase (285 aa).

Substrate-binding positions include 28–29 (DS) and 60–61 (YG). Residue C92 is the Proton donor/acceptor of the active site. 93–94 (NT) serves as a coordination point for substrate. Catalysis depends on C204, which acts as the Proton donor/acceptor. A substrate-binding site is contributed by 205–206 (TH).

This sequence belongs to the aspartate/glutamate racemases family.

The enzyme catalyses L-glutamate = D-glutamate. The protein operates within cell wall biogenesis; peptidoglycan biosynthesis. Functionally, provides the (R)-glutamate required for cell wall biosynthesis. In Escherichia coli O6:H1 (strain CFT073 / ATCC 700928 / UPEC), this protein is Glutamate racemase.